The following is a 132-amino-acid chain: Large ribosomal subunit protein bL21 (132 aa).

The segment at 111-132 is disordered; that stretch reads AAEKPARKPRAKKTNEVTTDGA.

This sequence belongs to the bacterial ribosomal protein bL21 family. In terms of assembly, part of the 50S ribosomal subunit. Contacts protein L20.

Its function is as follows. This protein binds to 23S rRNA in the presence of protein L20. The chain is Large ribosomal subunit protein bL21 from Dehalococcoides mccartyi (strain CBDB1).